The sequence spans 304 residues: Protease HtpX homolog (304 aa).

The next 2 helical transmembrane spans lie at 14–34 and 39–59; these read VFII…IGII and YLNG…IMVM. His144 serves as a coordination point for Zn(2+). Residue Glu145 is part of the active site. His148 lines the Zn(2+) pocket. A run of 2 helical transmembrane segments spans residues 159 to 179 and 202 to 222; these read IAIA…RLIF and IIIY…ATAI. Glu231 contacts Zn(2+). A disordered region spans residues 275–304; sequence SSPLKSKKDKPGLFDSHPPISSRIERLENM.

The protein belongs to the peptidase M48B family. The cofactor is Zn(2+).

The protein localises to the cell membrane. In Listeria innocua serovar 6a (strain ATCC BAA-680 / CLIP 11262), this protein is Protease HtpX homolog.